Reading from the N-terminus, the 280-residue chain is Urease accessory protein UreD 1 (280 aa).

It belongs to the UreD family. In terms of assembly, ureD, UreF and UreG form a complex that acts as a GTP-hydrolysis-dependent molecular chaperone, activating the urease apoprotein by helping to assemble the nickel containing metallocenter of UreC. The UreE protein probably delivers the nickel.

The protein localises to the cytoplasm. Required for maturation of urease via the functional incorporation of the urease nickel metallocenter. This Brucella canis (strain ATCC 23365 / NCTC 10854 / RM-666) protein is Urease accessory protein UreD 1.